Consider the following 208-residue polypeptide: Small ribosomal subunit protein uS4 (208 aa).

The S4 RNA-binding domain maps to 98–161; that stretch reads RRLDNVIYRL…KESPRIKELL (64 aa).

It belongs to the universal ribosomal protein uS4 family. Part of the 30S ribosomal subunit. Contacts protein S5. The interaction surface between S4 and S5 is involved in control of translational fidelity.

One of the primary rRNA binding proteins, it binds directly to 16S rRNA where it nucleates assembly of the body of the 30S subunit. Its function is as follows. With S5 and S12 plays an important role in translational accuracy. The protein is Small ribosomal subunit protein uS4 of Pelotomaculum thermopropionicum (strain DSM 13744 / JCM 10971 / SI).